A 276-amino-acid chain; its full sequence is UPF0276 protein CV_3513 (276 aa).

The protein belongs to the UPF0276 family.

The polypeptide is UPF0276 protein CV_3513 (Chromobacterium violaceum (strain ATCC 12472 / DSM 30191 / JCM 1249 / CCUG 213 / NBRC 12614 / NCIMB 9131 / NCTC 9757 / MK)).